Here is a 147-residue protein sequence, read N- to C-terminus: D-aminoacyl-tRNA deacylase (147 aa).

The Gly-cisPro motif, important for rejection of L-amino acids signature appears at 136–137 (GP).

It belongs to the DTD family. Homodimer.

It is found in the cytoplasm. The enzyme catalyses glycyl-tRNA(Ala) + H2O = tRNA(Ala) + glycine + H(+). It carries out the reaction a D-aminoacyl-tRNA + H2O = a tRNA + a D-alpha-amino acid + H(+). An aminoacyl-tRNA editing enzyme that deacylates mischarged D-aminoacyl-tRNAs. Also deacylates mischarged glycyl-tRNA(Ala), protecting cells against glycine mischarging by AlaRS. Acts via tRNA-based rather than protein-based catalysis; rejects L-amino acids rather than detecting D-amino acids in the active site. By recycling D-aminoacyl-tRNA to D-amino acids and free tRNA molecules, this enzyme counteracts the toxicity associated with the formation of D-aminoacyl-tRNA entities in vivo and helps enforce protein L-homochirality. This Streptococcus suis (strain 98HAH33) protein is D-aminoacyl-tRNA deacylase.